Here is a 180-residue protein sequence, read N- to C-terminus: Large ribosomal subunit protein uL22 (180 aa).

2 disordered regions span residues 1 to 20 (MTKP…CKSR) and 160 to 180 (PKPA…EISA). Positions 8 to 20 (KTPSNPEKSCKSR) are enriched in polar residues.

This sequence belongs to the universal ribosomal protein uL22 family.

The polypeptide is Large ribosomal subunit protein uL22 (rpl17) (Dictyostelium discoideum (Social amoeba)).